Consider the following 122-residue polypeptide: Double-headed protease inhibitor, submandibular gland (122 aa).

2 Kazal-like domains span residues 10-70 (GGRK…ECDI) and 71-121 (ECTQ…QCQS). 6 disulfides stabilise this stretch: Cys-16/Cys-50, Cys-28/Cys-47, Cys-36/Cys-68, Cys-72/Cys-101, Cys-79/Cys-98, and Cys-87/Cys-119.

The protein resides in the secreted. This inhibitor is composed of two homologous actively inhibiting halves: one which inhibits trypsin, the other which inhibits elastase. In Martes martes (European pine marten), this protein is Double-headed protease inhibitor, submandibular gland.